The chain runs to 169 residues: Putative prolyl-tRNA synthetase associated domain-containing protein 1 (169 aa).

The protein belongs to the PRORSD1 family.

The protein is Putative prolyl-tRNA synthetase associated domain-containing protein 1 (PRORSD1P) of Homo sapiens (Human).